The chain runs to 215 residues: UPF0056 membrane protein bbp_248 (215 aa).

6 helical membrane passes run 10-32 (IYISFFFSLFALVNPIGMIPIFT), 52-74 (FSVAIILSISLIFGSFILNLFGI), 78-100 (SFRISGGILVMIIAISMINGNFI), 119-141 (ISIVPLAMPLIAGPGAISSTIVW), 151-169 (IFGCMVTIMLFSCFCWTLF), and 190-207 (IMGLLLMSLGIEFILAGL).

This sequence belongs to the UPF0056 (MarC) family.

The protein resides in the cell membrane. This is UPF0056 membrane protein bbp_248 from Buchnera aphidicola subsp. Baizongia pistaciae (strain Bp).